A 391-amino-acid chain; its full sequence is Digeranylgeranylglycerophospholipid reductase (391 aa).

Positions 18, 37, 48, 49, 51, 98, 122, 279, 291, and 292 each coordinate FAD.

Belongs to the geranylgeranyl reductase family. DGGGPL reductase subfamily. FAD is required as a cofactor.

The catalysed reaction is a 2,3-bis-O-phytanyl-sn-glycerol 1-phospholipid + 8 A = a 2,3-bis-O-(geranylgeranyl)-sn-glycerol 1-phospholipid + 8 AH2. The enzyme catalyses 2,3-bis-O-(phytanyl)-sn-glycerol 1-phosphate + 8 A = 2,3-bis-O-(geranylgeranyl)-sn-glycerol 1-phosphate + 8 AH2. It carries out the reaction CDP-2,3-bis-O-(geranylgeranyl)-sn-glycerol + 8 AH2 = CDP-2,3-bis-O-(phytanyl)-sn-glycerol + 8 A. It catalyses the reaction archaetidylserine + 8 AH2 = 2,3-bis-O-phytanyl-sn-glycero-3-phospho-L-serine + 8 A. It functions in the pathway membrane lipid metabolism; glycerophospholipid metabolism. Is involved in the reduction of 2,3-digeranylgeranylglycerophospholipids (unsaturated archaeols) into 2,3-diphytanylglycerophospholipids (saturated archaeols) in the biosynthesis of archaeal membrane lipids. Catalyzes the formation of archaetidic acid (2,3-di-O-phytanyl-sn-glyceryl phosphate) from 2,3-di-O-geranylgeranylglyceryl phosphate (DGGGP) via the hydrogenation of each double bond of the isoprenoid chains. Is also probably able to reduce double bonds of geranyl groups in CDP-2,3-bis-O-(geranylgeranyl)-sn-glycerol and archaetidylserine, thus acting at various stages in the biosynthesis of archaeal membrane lipids. This is Digeranylgeranylglycerophospholipid reductase from Methanocaldococcus jannaschii (strain ATCC 43067 / DSM 2661 / JAL-1 / JCM 10045 / NBRC 100440) (Methanococcus jannaschii).